The following is a 221-amino-acid chain: Max dimerization protein 1 (221 aa).

A Nuclear localization signal motif is present at residues 21–49; sequence RREREAEHGYASMLPYNSKERDGLKRKSK. 2 disordered regions span residues 28 to 67 and 176 to 202; these read HGYA…EKNR and DWSS…DEGY. Residues 55–107 form the bHLH domain; sequence NSRSTHNEMEKNRRAHLRLCLEKLKILVPLGPESNRHTTLSLLTRAKSHIKKL. The span at 192–202 shows a compositional bias: polar residues; the sequence is SMQSICSDEGY.

In terms of assembly, efficient DNA binding requires dimerization with another bHLH protein. Binds DNA as a heterodimer with MAX.

The protein resides in the nucleus. Its function is as follows. Transcriptional repressor. MAD binds with MAX to form a sequence-specific DNA-binding protein complex which recognizes the core sequence 5'-CAC[GA]TG-3'. MAD thus antagonizes MYC transcriptional activity by competing for MAX. The chain is Max dimerization protein 1 (mxd1) from Xenopus tropicalis (Western clawed frog).